The following is a 545-amino-acid chain: Thermosome subunit (545 aa).

Belongs to the TCP-1 chaperonin family. Forms an oligomeric complex of eight-membered rings.

Functionally, molecular chaperone; binds unfolded polypeptides in vitro, and has a weak ATPase activity. This Desulfurococcus sp. (strain SY) protein is Thermosome subunit (ths).